The chain runs to 557 residues: Urocanate hydratase (557 aa).

NAD(+)-binding positions include 53 to 54 (GG), glutamine 131, 177 to 179 (GMG), glutamate 197, arginine 202, 243 to 244 (NA), 264 to 268 (QTSAH), 274 to 275 (YL), and tyrosine 323. Cysteine 411 is a catalytic residue. Glycine 493 is an NAD(+) binding site.

The protein belongs to the urocanase family. It depends on NAD(+) as a cofactor.

The protein resides in the cytoplasm. The catalysed reaction is 4-imidazolone-5-propanoate = trans-urocanate + H2O. Its pathway is amino-acid degradation; L-histidine degradation into L-glutamate; N-formimidoyl-L-glutamate from L-histidine: step 2/3. Functionally, catalyzes the conversion of urocanate to 4-imidazolone-5-propionate. The protein is Urocanate hydratase of Pseudomonas entomophila (strain L48).